We begin with the raw amino-acid sequence, 78 residues long: uncharacterized protein (78 aa).

A disordered region spans residues 1–28; the sequence is MQANHSVSYLYESSTSKRSNGLFSQTQK.

This is an uncharacterized protein from Saccharomyces cerevisiae (strain ATCC 204508 / S288c) (Baker's yeast).